Reading from the N-terminus, the 501-residue chain is MTDIAAPPAPGTSPVRVRFCPSPTGTPHVGLIRTALFNWAHARHTGGTFVFRIEDTDAARDSEESYAQILDALDWLGLDWDEGIGVGGPHEPYRQSLRRPVYDDVVRRLREAGHLYESFSTAEEIEARHEAAGRPKVLGYDGFDRDLTPEQVAAFRAEGREPTLRLRLPEGRDYSFDDVVRGRIEFKAGSFPDPVLVRANGDPLYTLVNPVDDALMGITHVLRGEDLLSSTPRQIALHEALVDIGVSQAVPLFGHLPYVTGEGSKKLSKRDPESNLFHHRDRGFIREGLLNYLALLGWGISEDRDVFSVEEMVAAFDVADVNASPARFDVAKAEAINAAHLRLLAPEDFRGRLVPYLQAAGVLPAQPSPEQLERLAAAAPLVQERMTLLGQAPGMLGFLFVADGDVVLEPDATAALRPEAADVLDASLAALEALTGWTTADLEAALRAAVVEGLGVKPKFAFAPLRTAVTGRRVSPPLFESMEILGRESSLARLRRLRATL.

The short motif at 21-31 (PSPTGTPHVGL) is the 'HIGH' region element. The 'KMSKS' region signature appears at 266–270 (KLSKR). Position 269 (Lys269) interacts with ATP.

This sequence belongs to the class-I aminoacyl-tRNA synthetase family. Glutamate--tRNA ligase type 1 subfamily. As to quaternary structure, monomer.

It is found in the cytoplasm. The catalysed reaction is tRNA(Glu) + L-glutamate + ATP = L-glutamyl-tRNA(Glu) + AMP + diphosphate. In terms of biological role, catalyzes the attachment of glutamate to tRNA(Glu) in a two-step reaction: glutamate is first activated by ATP to form Glu-AMP and then transferred to the acceptor end of tRNA(Glu). In Kineococcus radiotolerans (strain ATCC BAA-149 / DSM 14245 / SRS30216), this protein is Glutamate--tRNA ligase.